The following is a 95-amino-acid chain: Co-chaperonin GroES (95 aa).

The protein belongs to the GroES chaperonin family. In terms of assembly, heptamer of 7 subunits arranged in a ring. Interacts with the chaperonin GroEL.

The protein resides in the cytoplasm. Its function is as follows. Together with the chaperonin GroEL, plays an essential role in assisting protein folding. The GroEL-GroES system forms a nano-cage that allows encapsulation of the non-native substrate proteins and provides a physical environment optimized to promote and accelerate protein folding. GroES binds to the apical surface of the GroEL ring, thereby capping the opening of the GroEL channel. The polypeptide is Co-chaperonin GroES (Rickettsia prowazekii (strain Madrid E)).